Reading from the N-terminus, the 248-residue chain is 1-(5-phosphoribosyl)-5-[(5-phosphoribosylamino)methylideneamino] imidazole-4-carboxamide isomerase (248 aa).

Catalysis depends on aspartate 7, which acts as the Proton acceptor. The active-site Proton donor is aspartate 131.

It belongs to the HisA/HisF family.

The protein localises to the cytoplasm. It catalyses the reaction 1-(5-phospho-beta-D-ribosyl)-5-[(5-phospho-beta-D-ribosylamino)methylideneamino]imidazole-4-carboxamide = 5-[(5-phospho-1-deoxy-D-ribulos-1-ylimino)methylamino]-1-(5-phospho-beta-D-ribosyl)imidazole-4-carboxamide. It participates in amino-acid biosynthesis; L-histidine biosynthesis; L-histidine from 5-phospho-alpha-D-ribose 1-diphosphate: step 4/9. This Baumannia cicadellinicola subsp. Homalodisca coagulata protein is 1-(5-phosphoribosyl)-5-[(5-phosphoribosylamino)methylideneamino] imidazole-4-carboxamide isomerase.